Reading from the N-terminus, the 149-residue chain is Large ribosomal subunit protein bL9 (149 aa).

This sequence belongs to the bacterial ribosomal protein bL9 family.

Its function is as follows. Binds to the 23S rRNA. In Geobacillus sp. (strain WCH70), this protein is Large ribosomal subunit protein bL9.